Reading from the N-terminus, the 342-residue chain is S-adenosylmethionine:tRNA ribosyltransferase-isomerase (342 aa).

The protein belongs to the QueA family. As to quaternary structure, monomer.

Its subcellular location is the cytoplasm. The catalysed reaction is 7-aminomethyl-7-carbaguanosine(34) in tRNA + S-adenosyl-L-methionine = epoxyqueuosine(34) in tRNA + adenine + L-methionine + 2 H(+). It functions in the pathway tRNA modification; tRNA-queuosine biosynthesis. Transfers and isomerizes the ribose moiety from AdoMet to the 7-aminomethyl group of 7-deazaguanine (preQ1-tRNA) to give epoxyqueuosine (oQ-tRNA). This is S-adenosylmethionine:tRNA ribosyltransferase-isomerase from Novosphingobium aromaticivorans (strain ATCC 700278 / DSM 12444 / CCUG 56034 / CIP 105152 / NBRC 16084 / F199).